Consider the following 401-residue polypeptide: Shugoshin (401 aa).

Residues 3–49 (SKVEQQYKLLNAELMDQVQKQRLEIGEYRKRVISLEREIMDIREEHV) adopt a coiled-coil conformation. Residues 82-197 (EPAPAAQINR…VEETQTEQNE (116 aa)) form a disordered region. Basic and acidic residues predominate over residues 98–108 (SSREICKDMRR). A compositionally biased stretch (low complexity) spans 114–137 (RTTRPISPRRSSSVTSTVSSTSRR). A phosphoserine; by AurB mark is found at S124, S125, and S126. A compositionally biased stretch (acidic residues) spans 171 to 183 (VFDEDDSDDDFDE). T331 carries the post-translational modification Phosphothreonine; by PLK1. Positions 338 to 401 (EEMPSIRTRS…GSKGKAKAKK (64 aa)) are disordered. The segment covering 348-377 (RTAANKKSENTDMSSSFCNNSARPSRSCRP) has biased composition (polar residues). Residues 387 to 401 (NKLRNGSKGKAKAKK) are compositionally biased toward basic residues.

This sequence belongs to the shugoshin family. Homodimer. Interacts with Incenp. In terms of processing, phosphorylation by polo-like kinase (PLK) on Thr-331 antagonizes cohesive function. Phosphorylation on Thr-331 at the metaphase anaphase transition leads to its dissociation from centromeres. In contrast, phosphorylation by aurB/ial on either Ser-124, Ser-125 or Ser-126 is required for association with centromeres.

It localises to the chromosome. The protein localises to the centromere. Functionally, plays a central role in chromosome cohesion during meiosis and mitosis by preventing premature dissociation of cohesin complex from centromeres after prophase, when most of cohesin complex dissociates from chromosomes arms. May act by protecting or Rad21 from cleavage by Sse/separase. Required during meiosis in both males and females. The sequence is that of Shugoshin (mei-S332) from Drosophila melanogaster (Fruit fly).